The following is a 177-amino-acid chain: MADNTVILDGSGVKRALTRIAHEVLEKNKGVEGLVLVGIRTGGVFLAQELAERLVEIEGVEVPCGAVDITMYRDDIKGHAEHLPVGKTELPFSIEGKKVVLVDDVLFTGRTIRAAMDALMDQGRASCIQLAVLVDRGHRDLPIRADFVGRNVPTSRSENIVVAFDAGNKPTEVILQK.

The short motif at 99–111 (VVLVDDVLFTGRT) is the PRPP-binding element.

It belongs to the purine/pyrimidine phosphoribosyltransferase family. PyrR subfamily.

It carries out the reaction UMP + diphosphate = 5-phospho-alpha-D-ribose 1-diphosphate + uracil. In terms of biological role, regulates the transcription of the pyrimidine nucleotide (pyr) operon in response to exogenous pyrimidines. Its function is as follows. Also displays a weak uracil phosphoribosyltransferase activity which is not physiologically significant. In Citrifermentans bemidjiense (strain ATCC BAA-1014 / DSM 16622 / JCM 12645 / Bem) (Geobacter bemidjiensis), this protein is Bifunctional protein PyrR.